We begin with the raw amino-acid sequence, 202 residues long: Recombination protein RecR (202 aa).

The segment at Cys-61 to Cys-76 adopts a C4-type zinc-finger fold. The region spanning Gly-84–Pro-179 is the Toprim domain.

Belongs to the RecR family.

Its function is as follows. May play a role in DNA repair. It seems to be involved in an RecBC-independent recombinational process of DNA repair. It may act with RecF and RecO. This Bordetella pertussis (strain Tohama I / ATCC BAA-589 / NCTC 13251) protein is Recombination protein RecR.